We begin with the raw amino-acid sequence, 98 residues long: NADH-ubiquinone oxidoreductase chain 4L (98 aa).

The next 3 membrane-spanning stretches (helical) occupy residues 1–21 (MIPTYMNIMLAFTISLLGMLT), 27–47 (VASLLCLEGMMMSLFIMATLI), and 61–81 (IILLVFAACEAAVGLALLISI).

It belongs to the complex I subunit 4L family. As to quaternary structure, core subunit of respiratory chain NADH dehydrogenase (Complex I) which is composed of 45 different subunits.

The protein resides in the mitochondrion inner membrane. It catalyses the reaction a ubiquinone + NADH + 5 H(+)(in) = a ubiquinol + NAD(+) + 4 H(+)(out). Core subunit of the mitochondrial membrane respiratory chain NADH dehydrogenase (Complex I) which catalyzes electron transfer from NADH through the respiratory chain, using ubiquinone as an electron acceptor. Part of the enzyme membrane arm which is embedded in the lipid bilayer and involved in proton translocation. In Macaca hecki (Heck's macaque), this protein is NADH-ubiquinone oxidoreductase chain 4L (MT-ND4L).